Consider the following 345-residue polypeptide: Methionine import ATP-binding protein MetN (345 aa).

The 240-residue stretch at 2-241 (IKLNNITKIF…PKTELAQEFI (240 aa)) folds into the ABC transporter domain. An ATP-binding site is contributed by 38–45 (GASGAGKS).

This sequence belongs to the ABC transporter superfamily. Methionine importer (TC 3.A.1.24) family. As to quaternary structure, the complex is composed of two ATP-binding proteins (MetN), two transmembrane proteins (MetI) and a solute-binding protein (MetQ).

It localises to the cell inner membrane. It catalyses the reaction L-methionine(out) + ATP + H2O = L-methionine(in) + ADP + phosphate + H(+). The enzyme catalyses D-methionine(out) + ATP + H2O = D-methionine(in) + ADP + phosphate + H(+). Part of the ABC transporter complex MetNIQ involved in methionine import. Responsible for energy coupling to the transport system. In Haemophilus influenzae (strain 86-028NP), this protein is Methionine import ATP-binding protein MetN.